We begin with the raw amino-acid sequence, 531 residues long: Plant UBX domain-containing protein 11 (531 aa).

At Met-1 the chain carries N-acetylmethionine. A compositionally biased stretch (low complexity) spans 160 to 173 (AVASPSTASSVQPS). Disordered regions lie at residues 160 to 316 (AVAS…KASD) and 441 to 531 (ANAS…NDRR). 2 stretches are compositionally biased toward polar residues: residues 174–190 (ETKSTVTSASTTENNDG) and 201–214 (EPSNLCDTTKNQPA). Basic and acidic residues predominate over residues 290–301 (VDTKETMKPKDE). The UBX domain maps to 312–390 (KKASDVHLNI…RLFDRQALVV (79 aa)). Composition is skewed to polar residues over residues 441–478 (ANASSSVPERQTRPNTEVRNNLGQVGTSFQDPSEGRSN) and 486–496 (TSRIGSNIHTL).

As to quaternary structure, interacts with CDC48A.

The polypeptide is Plant UBX domain-containing protein 11 (Arabidopsis thaliana (Mouse-ear cress)).